We begin with the raw amino-acid sequence, 186 residues long: Lumazine protein (186 aa).

Lumazine-binding repeat units lie at residues Met1–Gly96 and Gly97–Trp186.

Requires 6,7-dimethyl-8-(1-D-ribityl)lumazine as cofactor.

Functionally, antenna protein that modulates the color of the bioluminescence emission of the luciferase. In the presence of LumP, luciferase emission is shifted to higher energy values (shorter wavelength). The protein is Lumazine protein (lumP) of Photobacterium leiognathi.